The following is a 154-amino-acid chain: Endoribonuclease YbeY (154 aa).

H115, H119, and H125 together coordinate Zn(2+).

The protein belongs to the endoribonuclease YbeY family. Requires Zn(2+) as cofactor.

Its subcellular location is the cytoplasm. Functionally, single strand-specific metallo-endoribonuclease involved in late-stage 70S ribosome quality control and in maturation of the 3' terminus of the 16S rRNA. This is Endoribonuclease YbeY from Halorhodospira halophila (strain DSM 244 / SL1) (Ectothiorhodospira halophila (strain DSM 244 / SL1)).